We begin with the raw amino-acid sequence, 164 residues long: Phosphopantetheine adenylyltransferase (164 aa).

Ser-10 contacts substrate. ATP contacts are provided by residues 10 to 11 (SF) and His-18. Substrate contacts are provided by Lys-42, Leu-74, and Arg-88. Residues 89 to 91 (GLR), Glu-99, and 124 to 130 (YAFLSSS) contribute to the ATP site.

This sequence belongs to the bacterial CoaD family. As to quaternary structure, homohexamer. Mg(2+) serves as cofactor.

It is found in the cytoplasm. The catalysed reaction is (R)-4'-phosphopantetheine + ATP + H(+) = 3'-dephospho-CoA + diphosphate. Its pathway is cofactor biosynthesis; coenzyme A biosynthesis; CoA from (R)-pantothenate: step 4/5. Its function is as follows. Reversibly transfers an adenylyl group from ATP to 4'-phosphopantetheine, yielding dephospho-CoA (dPCoA) and pyrophosphate. The sequence is that of Phosphopantetheine adenylyltransferase from Geobacillus thermodenitrificans (strain NG80-2).